The primary structure comprises 203 residues: Large ribosomal subunit protein bL25 (203 aa).

The protein belongs to the bacterial ribosomal protein bL25 family. CTC subfamily. Part of the 50S ribosomal subunit; part of the 5S rRNA/L5/L18/L25 subcomplex. Contacts the 5S rRNA. Binds to the 5S rRNA independently of L5 and L18.

Functionally, this is one of the proteins that binds to the 5S RNA in the ribosome where it forms part of the central protuberance. This is Large ribosomal subunit protein bL25 from Cellvibrio japonicus (strain Ueda107) (Pseudomonas fluorescens subsp. cellulosa).